Here is a 346-residue protein sequence, read N- to C-terminus: MGENLPLLLSAALGKKVNRPPVWMMRQAGRYMKIYRDLRERYPSFRERSENPELSYQISMQPFKAFKPDGVILFSDILTPLPGMGINFEIIESKGPIIENPIKNIHQIENLKELVPSESLSFVGEVLSSLKKDVNNEATVLGFVGAPWTLAAYVVEGKSSKNYSLIKSMAFKEPDLLHKLLDHFAKSIGEYLKYQIKSGAQVVQIFDSWAGQLSPQDYDIFAGPYQKKVVDIVKEKYPETPIILYISGSAGLLERMARTGVDIISLDWTVDIEEACKRIPEGIGIQGNVDPGLLFGNKESIKERIDITFNKSKGRKYILNLGHGILPGTPEENAQTFFEHGKKLTY.

Substrate contacts are provided by residues 26-30 (RQAGR), Asp-76, Tyr-153, Ser-208, and His-323.

Belongs to the uroporphyrinogen decarboxylase family. As to quaternary structure, homodimer.

The protein resides in the cytoplasm. It carries out the reaction uroporphyrinogen III + 4 H(+) = coproporphyrinogen III + 4 CO2. The protein operates within porphyrin-containing compound metabolism; protoporphyrin-IX biosynthesis; coproporphyrinogen-III from 5-aminolevulinate: step 4/4. In terms of biological role, catalyzes the decarboxylation of four acetate groups of uroporphyrinogen-III to yield coproporphyrinogen-III. The protein is Uroporphyrinogen decarboxylase of Prochlorococcus marinus (strain MIT 9515).